Reading from the N-terminus, the 214-residue chain is Outer-membrane lipoprotein LolB (214 aa).

Residues 1–25 form the signal peptide; sequence MNNLKRLTKTIFSCFTLSALLLLAG. C26 carries N-palmitoyl cysteine lipidation. C26 carries S-diacylglycerol cysteine lipidation. Residues 143-160 are compositionally biased toward polar residues; that stretch reads QVIESDSQGKPKQLTNTQ. The interval 143-163 is disordered; that stretch reads QVIESDSQGKPKQLTNTQTPP.

The protein belongs to the LolB family. Monomer.

It is found in the cell outer membrane. Plays a critical role in the incorporation of lipoproteins in the outer membrane after they are released by the LolA protein. The sequence is that of Outer-membrane lipoprotein LolB from Shewanella baltica (strain OS223).